Reading from the N-terminus, the 203-residue chain is Ras-like protein family member 10A (203 aa).

The interval 1-203 (MGGSLRVAVL…ALHPARCSLM (203 aa)) is small GTPase-like. Residue 11–18 (GAPGVGKT) coordinates GTP. An Effector region motif is present at residues 33 to 42 (HRPTDSPCLY). Residues 59–62 (DGDV) and 129–132 (NKRD) each bind GTP. Cysteine methyl ester is present on Cys-200. Cys-200 carries S-farnesyl cysteine lipidation. The propeptide at 201–203 (SLM) is removed in mature form.

Belongs to the small GTPase superfamily. Ras family. Isoprenylation is essential for nucleolar localization, and the proliferation-inhibiting activity of RASL10A.

It localises to the cell membrane. Its subcellular location is the nucleus. The protein localises to the nucleolus. It carries out the reaction GTP + H2O = GDP + phosphate + H(+). In terms of biological role, potent inhibitor of cellular proliferation. The chain is Ras-like protein family member 10A (Rasl10a) from Mus musculus (Mouse).